The chain runs to 208 residues: Small ribosomal subunit protein uS4 (208 aa).

The S4 RNA-binding domain maps to R98–E159.

Belongs to the universal ribosomal protein uS4 family. In terms of assembly, part of the 30S ribosomal subunit. Contacts protein S5. The interaction surface between S4 and S5 is involved in control of translational fidelity.

One of the primary rRNA binding proteins, it binds directly to 16S rRNA where it nucleates assembly of the body of the 30S subunit. Functionally, with S5 and S12 plays an important role in translational accuracy. In Geobacter sp. (strain M21), this protein is Small ribosomal subunit protein uS4.